Consider the following 478-residue polypeptide: BTB/POZ domain-containing protein 17 (478 aa).

Positions 1-28 (MPRRGYSKPGSWGSFWAMLTLVGLVTHA) are cleaved as a signal peptide. Residues Asn61, Asn100, and Asn195 are each glycosylated (N-linked (GlcNAc...) asparagine). A BTB domain is found at 63 to 132 (SDVVLRVQAA…LYCGELTVLL (70 aa)). The region spanning 169-269 (AVGWYHYAVG…IPPAQLFQLQ (101 aa)) is the BACK domain.

Its subcellular location is the secreted. The protein is BTB/POZ domain-containing protein 17 (BTBD17) of Homo sapiens (Human).